We begin with the raw amino-acid sequence, 273 residues long: GTP cyclohydrolase MptA (273 aa).

The protein belongs to the GTP cyclohydrolase IV family. In terms of assembly, homodimer. Fe(2+) is required as a cofactor.

It catalyses the reaction GTP + H2O = 7,8-dihydroneopterin 2',3'-cyclic phosphate + formate + diphosphate + H(+). It functions in the pathway cofactor biosynthesis; 5,6,7,8-tetrahydromethanopterin biosynthesis. Converts GTP to 7,8-dihydro-D-neopterin 2',3'-cyclic phosphate, the first intermediate in the biosynthesis of coenzyme methanopterin. The polypeptide is GTP cyclohydrolase MptA (Picrophilus torridus (strain ATCC 700027 / DSM 9790 / JCM 10055 / NBRC 100828 / KAW 2/3)).